Reading from the N-terminus, the 445-residue chain is Glutamyl-tRNA(Gln) amidotransferase subunit D (445 aa).

An Asparaginase/glutaminase domain is found at 93–425 (SEIKIISTGG…EKIRSLMISN (333 aa)). Active-site residues include Thr-103, Thr-179, Asp-180, and Lys-258.

This sequence belongs to the asparaginase 1 family. GatD subfamily. As to quaternary structure, heterodimer of GatD and GatE.

It catalyses the reaction L-glutamyl-tRNA(Gln) + L-glutamine + ATP + H2O = L-glutaminyl-tRNA(Gln) + L-glutamate + ADP + phosphate + H(+). Its function is as follows. Allows the formation of correctly charged Gln-tRNA(Gln) through the transamidation of misacylated Glu-tRNA(Gln) in organisms which lack glutaminyl-tRNA synthetase. The reaction takes place in the presence of glutamine and ATP through an activated gamma-phospho-Glu-tRNA(Gln). The GatDE system is specific for glutamate and does not act on aspartate. This Saccharolobus islandicus (strain M.16.27) (Sulfolobus islandicus) protein is Glutamyl-tRNA(Gln) amidotransferase subunit D.